Reading from the N-terminus, the 296-residue chain is 33 kDa chaperonin (296 aa).

Disulfide bonds link cysteine 236–cysteine 238 and cysteine 269–cysteine 272.

Belongs to the HSP33 family. In terms of processing, under oxidizing conditions two disulfide bonds are formed involving the reactive cysteines. Under reducing conditions zinc is bound to the reactive cysteines and the protein is inactive.

The protein resides in the cytoplasm. Redox regulated molecular chaperone. Protects both thermally unfolding and oxidatively damaged proteins from irreversible aggregation. Plays an important role in the bacterial defense system toward oxidative stress. This is 33 kDa chaperonin from Lactobacillus acidophilus (strain ATCC 700396 / NCK56 / N2 / NCFM).